We begin with the raw amino-acid sequence, 295 residues long: MEIRRRPPNPTVRVENLEYAVPHREAKAKNILEEIVWYKDIEIKNFKKIVSLEDLIKKLDKLPPTKDFGKSILQSKIKPGVIAEIKKASPSKGVIREDFRPNEIAFSYERSGASCISVLTDKRFFQGSYEILQDVRGATNLPLLCKDFIISAYQIYKARVSGADAILLIAAILSDDDLFYLKKIADNLGMSVLVEVHDEQELKRILSFKLFDLIGINNRDLKTFKTDLKTSIEMMSKYSDIFSKHNIIPISESGINNSEELKKLVSIGIKGVLIGERFMRECDIEHSFKKLFKSI.

The protein belongs to the TrpC family.

It carries out the reaction 1-(2-carboxyphenylamino)-1-deoxy-D-ribulose 5-phosphate + H(+) = (1S,2R)-1-C-(indol-3-yl)glycerol 3-phosphate + CO2 + H2O. Its pathway is amino-acid biosynthesis; L-tryptophan biosynthesis; L-tryptophan from chorismate: step 4/5. This is Indole-3-glycerol phosphate synthase from Prochlorococcus marinus (strain MIT 9515).